The following is a 443-amino-acid chain: Endothelin receptor type B (443 aa).

Positions 1-26 (MQPLRSLCGRALVALIFACGVAGVQS) are cleaved as a signal peptide. Residues 27–102 (EERGFPPAGA…GPIEIKDTFK (76 aa)) are Extracellular-facing. Residues 53-89 (TFWPRGSNASLPRSSSPPQMPKGGRMAGPPARTLTPP) are disordered. Over residues 59-69 (SNASLPRSSSP) the composition is skewed to polar residues. Residue Asn60 is glycosylated (N-linked (GlcNAc...) asparagine). The chain crosses the membrane as a helical span at residues 103–127 (YINTVVSCLVFVLGIIGNSTLLRII). Topologically, residues 128–138 (YKNKCMRNGPN) are cytoplasmic. The helical transmembrane segment at 139–164 (ILIASLALGDLLHIIIDIPINVYKLL) threads the bilayer. Residues 165–176 (AEDWPFGVEMCK) lie on the Extracellular side of the membrane. Cys175 and Cys256 are disulfide-bonded. The chain crosses the membrane as a helical span at residues 177–198 (LVPFIQKASVGITVLSLCALSI). Over 199–219 (DRYRAVASWSRIKGIGVPKWT) the chain is Cytoplasmic. Residues 220–244 (AVEIVLIWVVSVVLAVPEALGFDMI) form a helical membrane-spanning segment. Topologically, residues 245–272 (TTDYKGNRLRICLLHPTQKTAFMQFYKT) are extracellular. A helical transmembrane segment spans residues 273 to 297 (AKDWWLFSFYFCLPLAITAFFYTLM). Residues 298-325 (TCEMLRKKSGMQIALNDHLKQRREVAKT) are Cytoplasmic-facing. Ser306 carries the post-translational modification Phosphoserine. A helical transmembrane segment spans residues 326-351 (VFCLVLVFALCWLPLHLSRILKLTLY). Topologically, residues 352-363 (DQNDSNRCELLS) are extracellular. N-linked (GlcNAc...) asparagine glycosylation occurs at Asn354. Residues 364 to 390 (FLLVLDYIGINMASLNSCINPIALYLV) form a helical membrane-spanning segment. Residues 391–443 (SKRFKNCFKSCLCCWCQSFEEKQSLEEKQSCLKFKANDHGYDNFRSSNKYSSS) lie on the Cytoplasmic side of the membrane. 3 S-palmitoyl cysteine lipidation sites follow: Cys403, Cys404, and Cys406. Ser420 carries the phosphoserine modification. Phosphotyrosine is present on Tyr440. 3 positions are modified to phosphoserine: Ser441, Ser442, and Ser443.

The protein belongs to the G-protein coupled receptor 1 family. Endothelin receptor subfamily. EDNRB sub-subfamily.

It is found in the cell membrane. Its function is as follows. Non-specific receptor for endothelin 1, 2, and 3. Mediates its action by association with G proteins that activate a phosphatidylinositol-calcium second messenger system. The chain is Endothelin receptor type B (EDNRB) from Sus scrofa (Pig).